The primary structure comprises 458 residues: Mitochondrial-processing peptidase subunit beta (458 aa).

A mitochondrion-targeting transit peptide spans 1 to 41 (MYRRLASGLYQTSQRRIAQVQPKSVFVPETIVTTLPNGFRV). His-73 is a Zn(2+) binding site. Glu-76 acts as the Proton acceptor in catalysis. Zn(2+) is bound by residues His-77 and Glu-153.

This sequence belongs to the peptidase M16 family. Heterodimer of mppa-1 (alpha) and mppb-1 (beta) subunits, forming the mitochondrial processing protease (MPP) in which mppa-1 is involved in substrate recognition and binding and mppb-1 is the catalytic subunit. Zn(2+) is required as a cofactor.

Its subcellular location is the mitochondrion matrix. The enzyme catalyses Release of N-terminal transit peptides from precursor proteins imported into the mitochondrion, typically with Arg in position P2.. With respect to regulation, binding to mppa-1 is required for catalytic activity. Inhibited by metal chelator ethylenediaminetetraacetic acid (EDTA). Its function is as follows. Catalytic subunit of the essential mitochondrial processing protease (MPP), which cleaves the mitochondrial sequence off newly imported precursors proteins. Preferentially, cleaves after an arginine at position P2. This is Mitochondrial-processing peptidase subunit beta from Caenorhabditis elegans.